Consider the following 921-residue polypeptide: Dual serine/threonine and tyrosine protein kinase (921 aa).

The region spanning 645 to 899 (PKLGRELGRG…PLLGIVEPSL (255 aa)) is the Protein kinase domain. ATP is bound by residues 651 to 659 (LGRGQYGVV) and K674. The active-site Proton acceptor is D770.

It belongs to the protein kinase superfamily. Ser/Thr protein kinase family.

The protein resides in the cytoplasm. Its subcellular location is the cell membrane. It localises to the apical cell membrane. The protein localises to the basolateral cell membrane. It is found in the cell junction. It carries out the reaction L-seryl-[protein] + ATP = O-phospho-L-seryl-[protein] + ADP + H(+). It catalyses the reaction L-threonyl-[protein] + ATP = O-phospho-L-threonyl-[protein] + ADP + H(+). The enzyme catalyses L-tyrosyl-[protein] + ATP = O-phospho-L-tyrosyl-[protein] + ADP + H(+). In terms of biological role, may act as a positive regulator of ERK phosphorylation downstream of fibroblast growth factor-receptor activation. May induce both caspase-dependent apoptosis and caspase-independent cell death. May play a role in the embryonic development. The chain is Dual serine/threonine and tyrosine protein kinase (dstyk) from Takifugu rubripes (Japanese pufferfish).